A 561-amino-acid polypeptide reads, in one-letter code: Carboxylesterase 1E (561 aa).

An N-terminal signal peptide occupies residues 1 to 18 (MCLYALILVFLAAFTAGG). 2 N-linked (GlcNAc...) asparagine glycosylation sites follow: asparagine 79 and asparagine 107. The cysteines at positions 87 and 116 are disulfide-linked. Serine 221 serves as the catalytic Acyl-ester intermediate. Residues cysteine 273 and cysteine 284 are joined by a disulfide bond. Catalysis depends on charge relay system residues glutamate 353 and histidine 466. N-linked (GlcNAc...) asparagine glycosylation occurs at asparagine 489. The Prevents secretion from ER motif lies at 558–561 (HTEL).

The protein belongs to the type-B carboxylesterase/lipase family. As to expression, expressed in liver.

The protein localises to the endoplasmic reticulum lumen. The protein resides in the microsome membrane. It catalyses the reaction a carboxylic ester + H2O = an alcohol + a carboxylate + H(+). The catalysed reaction is all-trans-retinyl hexadecanoate + H2O = all-trans-retinol + hexadecanoate + H(+). Functionally, involved in the detoxification of xenobiotics and in the activation of ester and amide prodrugs. Hydrolyzes retinyl esters. The sequence is that of Carboxylesterase 1E (Ces1e) from Rattus norvegicus (Rat).